Here is a 573-residue protein sequence, read N- to C-terminus: Isocitrate dehydrogenase kinase/phosphatase (573 aa).

ATP is bound by residues 317–323 (APGVRGM) and Lys-338. Asp-373 is a catalytic residue.

The protein belongs to the AceK family.

It is found in the cytoplasm. The catalysed reaction is L-seryl-[isocitrate dehydrogenase] + ATP = O-phospho-L-seryl-[isocitrate dehydrogenase] + ADP + H(+). Functionally, bifunctional enzyme which can phosphorylate or dephosphorylate isocitrate dehydrogenase (IDH) on a specific serine residue. This is a regulatory mechanism which enables bacteria to bypass the Krebs cycle via the glyoxylate shunt in response to the source of carbon. When bacteria are grown on glucose, IDH is fully active and unphosphorylated, but when grown on acetate or ethanol, the activity of IDH declines drastically concomitant with its phosphorylation. This Pseudomonas fluorescens (strain Pf0-1) protein is Isocitrate dehydrogenase kinase/phosphatase.